Reading from the N-terminus, the 212-residue chain is uncharacterized protein (212 aa).

Residues glycine 53, glutamate 74, and aspartate 97 each coordinate S-adenosyl-L-methionine.

Belongs to the methyltransferase superfamily. YrrT family.

Its function is as follows. Could be a S-adenosyl-L-methionine-dependent methyltransferase. This is an uncharacterized protein from Bacillus mycoides (strain KBAB4) (Bacillus weihenstephanensis).